A 459-amino-acid polypeptide reads, in one-letter code: tRNA modification GTPase MnmE (459 aa).

The (6S)-5-formyl-5,6,7,8-tetrahydrofolate site is built by Arg21, Glu84, and Arg123. The TrmE-type G domain occupies 219–378 (GVTVALAGAV…LLVLLYNFVL (160 aa)). Residues 229–234 (NAGKSS), 248–254 (TEHPGTT), and 273–276 (DTAG) contribute to the GTP site. The Mg(2+) site is built by Ser233 and Thr254. Lys459 contacts (6S)-5-formyl-5,6,7,8-tetrahydrofolate.

It belongs to the TRAFAC class TrmE-Era-EngA-EngB-Septin-like GTPase superfamily. TrmE GTPase family. In terms of assembly, homodimer. Heterotetramer of two MnmE and two MnmG subunits. Requires K(+) as cofactor.

Its subcellular location is the cytoplasm. Functionally, exhibits a very high intrinsic GTPase hydrolysis rate. Involved in the addition of a carboxymethylaminomethyl (cmnm) group at the wobble position (U34) of certain tRNAs, forming tRNA-cmnm(5)s(2)U34. This chain is tRNA modification GTPase MnmE, found in Lawsonia intracellularis (strain PHE/MN1-00).